A 639-amino-acid polypeptide reads, in one-letter code: Complex I assembly factor Egm, mitochondrial (639 aa).

The transit peptide at 1 to 26 (MRPNLFSGASRLLTYSRNGKLLTRGR) directs the protein to the mitochondrion. Residues 23–65 (TRGRSTKATSSSLDSQHQDAATTEGGRAESVEESPEQQRKLPT) are disordered. A compositionally biased stretch (polar residues) spans 28–43 (TKATSSSLDSQHQDAA). The span at 48–65 (GRAESVEESPEQQRKLPT) shows a compositional bias: basic and acidic residues.

Belongs to the acyl-CoA dehydrogenase family. In terms of assembly, associates with mitochondrial complex I assembly intermediates during its biogenesis. FAD is required as a cofactor.

Its subcellular location is the mitochondrion. As part of the MCIA complex, primarily participates in the assembly of the mitochondrial complex I and therefore plays a role in oxidative phosphorylation. In Drosophila melanogaster (Fruit fly), this protein is Complex I assembly factor Egm, mitochondrial.